Here is a 341-residue protein sequence, read N- to C-terminus: COP9 signalosome complex subunit 6 (341 aa).

The tract at residues 1–43 (MEQMEVDVDMSAKPSTSSSAAAGSSMAVDKTADQNPQPQGNIM) is disordered. The segment covering 11–27 (SAKPSTSSSAAAGSSMA) has biased composition (low complexity). Residues 54-188 (ISLHPLVIMN…LKLFESLIDL (135 aa)) enclose the MPN domain.

It belongs to the peptidase M67A family. CSN6 subfamily. In terms of assembly, component of the CSN complex, probably composed of CSN1b, alien/CSN2, CSN3, CSN4, CSN5, CSN6, CSN7 and CSN8.

It localises to the cytoplasm. It is found in the nucleus. Its function is as follows. Component of the COP9 signalosome complex (CSN), a complex involved in various cellular and developmental processes. The CSN complex is an essential regulator of the ubiquitin (Ubl) conjugation pathway by mediating the deneddylation of the cullin subunits of the SCF-type E3 ligase complexes, leading to decrease the Ubl ligase activity of SCF. The CSN complex plays an essential role in oogenesis and embryogenesis and is required for proper photoreceptor R cell differentiation and promote lamina glial cell migration or axon targeting. It also promotes Ubl-dependent degradation of cyclin E (CycE) during early oogenesis. This chain is COP9 signalosome complex subunit 6 (CSN6), found in Drosophila melanogaster (Fruit fly).